A 155-amino-acid polypeptide reads, in one-letter code: Glycosylation-dependent cell adhesion molecule 1 (155 aa).

The first 18 residues, 1-18 (MKFFAVLLLASLAATSLA), serve as a signal peptide directing secretion. T34 carries an O-linked (GalNAc...) threonine glycan. S48, S53, S57, S59, and S65 each carry phosphoserine. The segment at 74 to 109 (ARRHQNQNPKLLHPVPQESSFRNTATQSEETKELTP) is disordered. A compositionally biased stretch (polar residues) spans 90 to 101 (QESSFRNTATQS).

The protein belongs to the PP3/GlyCAM-1 family. In terms of tissue distribution, highly expressed in whey fraction of camel milk.

In Camelus dromedarius (Dromedary), this protein is Glycosylation-dependent cell adhesion molecule 1 (GLYCAM1).